Here is a 475-residue protein sequence, read N- to C-terminus: Ribulose bisphosphate carboxylase large chain (475 aa).

Positions 1–2 (MS) are excised as a propeptide. P3 carries the N-acetylproline modification. K14 is subject to N6,N6,N6-trimethyllysine. Catalysis depends on K175, which acts as the Proton acceptor. 2 residues coordinate D-ribulose 1,5-bisphosphate: K175 and K177. Positions 201, 203, and 204 each coordinate Mg(2+). K201 bears the N6-carboxylysine mark. E204 lines the D-ribulose 1,5-bisphosphate pocket. H294 functions as the Proton acceptor in the catalytic mechanism. D-ribulose 1,5-bisphosphate-binding residues include R295, H327, K334, S379, G381, G403, and G404.

The protein belongs to the RuBisCO large chain family. Type I subfamily. As to quaternary structure, heterohexadecamer of 8 large chains and 8 small chains. Heterohexadecamer; disulfide-linked. The disulfide link is formed within the large subunit homodimers. The cofactor is Mg(2+). The disulfide bond which can form in the large chain dimeric partners within the hexadecamer appears to be associated with oxidative stress and protein turnover.

The protein resides in the plastid. It is found in the chloroplast. It carries out the reaction 2 (2R)-3-phosphoglycerate + 2 H(+) = D-ribulose 1,5-bisphosphate + CO2 + H2O. The enzyme catalyses D-ribulose 1,5-bisphosphate + O2 = 2-phosphoglycolate + (2R)-3-phosphoglycerate + 2 H(+). RuBisCO catalyzes two reactions: the carboxylation of D-ribulose 1,5-bisphosphate, the primary event in carbon dioxide fixation, as well as the oxidative fragmentation of the pentose substrate in the photorespiration process. Both reactions occur simultaneously and in competition at the same active site. Binds to abscisic acid (ABA); only half of the possible binding sites are occupied in the crystal and there are indications this is a low affinity site. The polypeptide is Ribulose bisphosphate carboxylase large chain (Pisum sativum (Garden pea)).